The following is a 1092-amino-acid chain: DNA polymerase II large subunit (1092 aa).

The protein belongs to the archaeal DNA polymerase II family. In terms of assembly, heterodimer of a large subunit and a small subunit.

It catalyses the reaction DNA(n) + a 2'-deoxyribonucleoside 5'-triphosphate = DNA(n+1) + diphosphate. It carries out the reaction Exonucleolytic cleavage in the 3'- to 5'-direction to yield nucleoside 5'-phosphates.. Functionally, possesses two activities: a DNA synthesis (polymerase) and an exonucleolytic activity that degrades single-stranded DNA in the 3'- to 5'-direction. Has a template-primer preference which is characteristic of a replicative DNA polymerase. This chain is DNA polymerase II large subunit (polC), found in Methanothermobacter thermautotrophicus (strain ATCC 29096 / DSM 1053 / JCM 10044 / NBRC 100330 / Delta H) (Methanobacterium thermoautotrophicum).